We begin with the raw amino-acid sequence, 367 residues long: tRNA/tmRNA (uracil-C(5))-methyltransferase (367 aa).

Positions 190, 218, 223, 239, and 299 each coordinate S-adenosyl-L-methionine. The active-site Nucleophile is the Cys324. The active-site Proton acceptor is Glu358.

The protein belongs to the class I-like SAM-binding methyltransferase superfamily. RNA M5U methyltransferase family. TrmA subfamily.

It carries out the reaction uridine(54) in tRNA + S-adenosyl-L-methionine = 5-methyluridine(54) in tRNA + S-adenosyl-L-homocysteine + H(+). The catalysed reaction is uridine(341) in tmRNA + S-adenosyl-L-methionine = 5-methyluridine(341) in tmRNA + S-adenosyl-L-homocysteine + H(+). In terms of biological role, dual-specificity methyltransferase that catalyzes the formation of 5-methyluridine at position 54 (m5U54) in all tRNAs, and that of position 341 (m5U341) in tmRNA (transfer-mRNA). This is tRNA/tmRNA (uracil-C(5))-methyltransferase from Musicola paradisiaca (strain Ech703) (Dickeya paradisiaca).